The primary structure comprises 644 residues: MVAITLPDGNVKEFDGATTVMEVAQSIGPGLAKATIAGRVDGKLVDASDPITQDASVEIVTAKDKDGVDIIRHSTAHLLGHAVKQLYPNVKMVIGPVIEDGFYYDIFSEKPFTPEDMAAIEKRMAELIKQNYDVIKKMTPREEAIKIFEERGEDYKLKLIADMPEEKELGLYHHQEYVDMCRGPHVPNTRFLKVFKLMKMSGAYWRGDAKNEQLQRIYGTAWADKKDLQAYIQRIEEAEKRDHRKIGKALNLFHMQEQSPGMVFWHPNGWTIYQVLEQYMRKVQKDNGYQEIKTPQIVDRSLWEKSGHWGNYATNMFTTSSESRDYAVKPMNCPCHVQVFNQGLKSYRELPIRLAEFGSCHRNEPSGSLHGLMRVRGFTQDDAHIFCTQAQIQEEVANFIKLTLDVYKDFGFDQIEMKLSTRPEKRVGTDESWDIAEKALADALDSSGLEWEYLPGEGAFYGPKIEFSLKDSLGRVWQCGTIQVDPNMPERLEAEFVNENNERETPIMLHRAILGSFERFLGMLIEHYAGWMPVWLAPQQVVVMNITDKQADACQNVASELQNAGLRAITDLRNEKIGFKIRERTLERIPYMLVLGDKEVESGQVNVRTREGENLGVMSVADFIELVQKAVAQKGRLTTKTDEE.

Positions 1 to 61 (MVAITLPDGN…TQDASVEIVT (61 aa)) constitute a TGS domain. A catalytic region spans residues 242–533 (DHRKIGKALN…LIEHYAGWMP (292 aa)). Residues cysteine 333, histidine 384, and histidine 510 each contribute to the Zn(2+) site.

Belongs to the class-II aminoacyl-tRNA synthetase family. As to quaternary structure, homodimer. Zn(2+) serves as cofactor.

The protein resides in the cytoplasm. The enzyme catalyses tRNA(Thr) + L-threonine + ATP = L-threonyl-tRNA(Thr) + AMP + diphosphate + H(+). In terms of biological role, catalyzes the attachment of threonine to tRNA(Thr) in a two-step reaction: L-threonine is first activated by ATP to form Thr-AMP and then transferred to the acceptor end of tRNA(Thr). Also edits incorrectly charged L-seryl-tRNA(Thr). In Psychrobacter sp. (strain PRwf-1), this protein is Threonine--tRNA ligase.